Reading from the N-terminus, the 233-residue chain is MSAVRENGVIVAIDGPSGAGKSSLTKLLAKRLGYIHIDTGAMFRAVALSAQRAGIKSDDDAGLAELCRGLEIAFARDGETCRVLANGEDVSTKIRTEEIGLLTSTISARKPVRQALLEMQRKMGAKGGVILEGRDIGTVVFPDAEVKFFLSASAEERGRRRYLELAARGESATLEETIAKVIQRDRQDEGREHAPLKQAQDAVPIDSTSLTIEQVLELMESTVKERLAQGDKG.

Residue 15-23 (GPSGAGKSS) coordinates ATP.

It belongs to the cytidylate kinase family. Type 1 subfamily.

It is found in the cytoplasm. It carries out the reaction CMP + ATP = CDP + ADP. The catalysed reaction is dCMP + ATP = dCDP + ADP. This Citrifermentans bemidjiense (strain ATCC BAA-1014 / DSM 16622 / JCM 12645 / Bem) (Geobacter bemidjiensis) protein is Cytidylate kinase.